A 238-amino-acid polypeptide reads, in one-letter code: ATP synthase subunit a (238 aa).

4 helical membrane passes run 17-37 (LSNI…AIIC), 80-100 (ITLL…QIAI), 112-132 (DPIV…YYGI), and 194-214 (IFVG…SIFI).

It belongs to the ATPase A chain family. F-type ATPases have 2 components, CF(1) - the catalytic core - and CF(0) - the membrane proton channel. CF(1) has five subunits: alpha(3), beta(3), gamma(1), delta(1), epsilon(1). CF(0) has three main subunits: a(1), b(2) and c(9-12). The alpha and beta chains form an alternating ring which encloses part of the gamma chain. CF(1) is attached to CF(0) by a central stalk formed by the gamma and epsilon chains, while a peripheral stalk is formed by the delta and b chains.

The protein localises to the cell membrane. In terms of biological role, key component of the proton channel; it plays a direct role in the translocation of protons across the membrane. This Listeria welshimeri serovar 6b (strain ATCC 35897 / DSM 20650 / CCUG 15529 / CIP 8149 / NCTC 11857 / SLCC 5334 / V8) protein is ATP synthase subunit a.